The primary structure comprises 840 residues: SLIT and NTRK-like protein 6 (840 aa).

The N-terminal stretch at 1–18 (MKLWTYLLYPSLLACLSL) is a signal peptide. An LRRNT 1 domain is found at 22-67 (SPMPSVRGSCDTLCNCEEKDGIMIINCEEKGINKLSQISVPPSRPF). Residues 23–609 (PMPSVRGSCD…LTDAVPLSVL (587 aa)) are Extracellular-facing. LRR repeat units lie at residues 89-110 (NALS…AFNG), 113-134 (LLKQ…TFHG), 137-158 (NLEF…AFSK), 161-182 (RLKV…IFRF), and 184-205 (PLTH…GFLE). In terms of domain architecture, LRRCT 1 spans 218–269 (NKWACNCELLQLKNWLENMPPQSIIGDVICYSPPPFKGSVLSRLKKESFCPT). Residues 319–360 (PSTQLPVPYCPIPCNCKVLSPSGLLIHCQERNIESLSDLQPP) form the LRRNT 2 domain. LRR repeat units lie at residues 363–384 (NPRK…DLTD), 387–408 (TLEM…SFMN), 411–432 (RLQK…MFLG), 435–456 (SLEY…TFNP), 459–480 (KLKV…IFLG), and 482–503 (PLTR…NILD). In terms of domain architecture, LRRCT 2 spans 516–567 (NPWDCSCDLVGLQQWIHKLGKGTMTDDILCTSPGHLDKKELKALNSDLLCPG). The helical transmembrane segment at 610–630 (ILGLLIVFITIVFCAAGIVVF) threads the bilayer. At 631–840 (VLHRRRRYKK…DYLEVLEQQT (210 aa)) the chain is on the cytoplasmic side. A compositionally biased stretch (basic and acidic residues) spans 717–726 (QRSLLERENH). The disordered stretch occupies residues 717–736 (QRSLLERENHSPLTGSNMKY). The segment covering 727–736 (SPLTGSNMKY) has biased composition (polar residues).

Belongs to the SLITRK family. As to expression, in the embryo, expressed in otic cyst, lateral trunk epidermis and underlying mesodermal tissue, limb bud, maxillary process, cochlea, retina, tongue, tooth primordium, central nervous system, and primordia of visceral organs including lung, gastrointestinal tract and pancreas. In the central nervous system, expressed primarily in dorsal thalamus, cerebellum and medulla.

It is found in the cell membrane. In terms of biological role, regulator of neurite outgrowth required for normal hearing and vision. In Mus musculus (Mouse), this protein is SLIT and NTRK-like protein 6 (Slitrk6).